Reading from the N-terminus, the 376-residue chain is Ribonucleoside-diphosphate reductase subunit beta (376 aa).

Residues Asp85, Glu116, and His119 each coordinate Fe cation. Tyr123 is a catalytic residue. Fe cation-binding residues include Glu205, Glu239, and His242.

The protein belongs to the ribonucleoside diphosphate reductase small chain family. Tetramer of two alpha and two beta subunits. Requires Fe cation as cofactor.

It carries out the reaction a 2'-deoxyribonucleoside 5'-diphosphate + [thioredoxin]-disulfide + H2O = a ribonucleoside 5'-diphosphate + [thioredoxin]-dithiol. In terms of biological role, provides the precursors necessary for DNA synthesis. Catalyzes the biosynthesis of deoxyribonucleotides from the corresponding ribonucleotides. The protein is Ribonucleoside-diphosphate reductase subunit beta (nrdB) of Buchnera aphidicola subsp. Acyrthosiphon pisum (strain APS) (Acyrthosiphon pisum symbiotic bacterium).